The sequence spans 574 residues: Ribonuclease Y (574 aa).

A helical membrane pass occupies residues methionine 1–leucine 21. The 64-residue stretch at alanine 264–leucine 327 folds into the KH domain. In terms of domain architecture, HD spans valine 390–alanine 483.

The protein belongs to the RNase Y family.

It localises to the cell membrane. Its function is as follows. Endoribonuclease that initiates mRNA decay. This Thermus thermophilus (strain ATCC BAA-163 / DSM 7039 / HB27) protein is Ribonuclease Y.